The chain runs to 282 residues: N-methyltransferase gliN (282 aa).

It belongs to the methyltransferase superfamily. LaeA methyltransferase family.

It participates in mycotoxin biosynthesis. Functionally, N-methyltransferase; part of the gene cluster that mediates the biosynthesis of gliotoxin, a member of the epipolythiodioxopiperazine (ETP) class of toxins characterized by a disulfide bridged cyclic dipeptide. The first step in gliotoxin biosynthesis is the condensation of serine and phenylalanine to form the cyclo-L-phenylalanyl-L-serine diketopiperazine (DKP) by the NRPS gliP. GliP is also able to produce the DKP cyclo-L-tryptophanyl-L-serine, suggesting that the substrate specificity of the first adenylation (A) domain in gliP is sufficiently relaxed to accommodate both L-Phe and L-Trp. The cytochrome P450 monooxygenase gliC has been shown to catalyze the subsequent hydroxylation of the alpha-carbon of L-Phe in cyclo-L-phenylalanyl-L-serine whereas the second cytochrome P450 enzyme, gliF, is presumably involved in the modification of the DKP side chain. The glutathione S-transferase (GST) gliG then forms a bis-glutathionylated biosynthetic intermediate which is responsible for the sulfurization of gliotoxin. This bis-glutathionylated intermediate is subsequently processed by the gamma-glutamyl cyclotransferase gliK to remove both gamma-glutamyl moieties. Subsequent processing via gliI yields a biosynthetic intermediate, which is N-methylated via the N-methyltransferase gliN, before the gliotoxin oxidoreductase gliT-mediated disulfide bridge closure. GliN-mediated amide methylation confers stability to ETP, damping the spontaneous formation of tri- and tetrasulfides. Intracellular dithiol gliotoxin oxidized by gliT is subsequently effluxed by gliA. Gliotoxin contributes to pathogenesis during invasive aspergillosis. In macrophages and neutrophils, gliotoxin showed inhibition of various different cell functions including cytokine production, antigen presentation, phagocytosis, and production of reactive oxygen species. The polypeptide is N-methyltransferase gliN (Aspergillus fumigatus (strain ATCC MYA-4609 / CBS 101355 / FGSC A1100 / Af293) (Neosartorya fumigata)).